A 340-amino-acid chain; its full sequence is Phenylalanine--tRNA ligase alpha subunit (340 aa).

Residue E258 coordinates Mg(2+).

Belongs to the class-II aminoacyl-tRNA synthetase family. Phe-tRNA synthetase alpha subunit type 1 subfamily. Tetramer of two alpha and two beta subunits. Mg(2+) is required as a cofactor.

The protein localises to the cytoplasm. The catalysed reaction is tRNA(Phe) + L-phenylalanine + ATP = L-phenylalanyl-tRNA(Phe) + AMP + diphosphate + H(+). This is Phenylalanine--tRNA ligase alpha subunit from Corynebacterium efficiens (strain DSM 44549 / YS-314 / AJ 12310 / JCM 11189 / NBRC 100395).